Consider the following 126-residue polypeptide: Acidic phospholipase A2 4 (126 aa).

Residue Ser1 is a signal peptide. A propeptide spanning residues Asn2–Leu7 is cleaved from the precursor. 7 disulfides stabilise this stretch: Cys18-Cys78, Cys33-Cys125, Cys35-Cys51, Cys50-Cys106, Cys57-Cys99, Cys67-Cys92, and Cys85-Cys97. Ca(2+)-binding residues include Tyr34, Gly36, and Gly38. Residue His54 is part of the active site. Residue Asp55 participates in Ca(2+) binding. Residue Asp100 is part of the active site.

This sequence belongs to the phospholipase A2 family. Group I subfamily. D49 sub-subfamily. Monomer. It depends on Ca(2+) as a cofactor. In terms of tissue distribution, expressed by the venom gland.

It is found in the secreted. The catalysed reaction is a 1,2-diacyl-sn-glycero-3-phosphocholine + H2O = a 1-acyl-sn-glycero-3-phosphocholine + a fatty acid + H(+). Functionally, snake venom phospholipase A2 (PLA2) that exhibits strong anticoagulant activity, which is not due to the catalytic activity. PLA2 catalyzes the calcium-dependent hydrolysis of the 2-acyl groups in 3-sn-phosphoglycerides. This is Acidic phospholipase A2 4 from Naja sagittifera (Andaman cobra).